A 150-amino-acid polypeptide reads, in one-letter code: Ribonuclease H (150 aa).

Positions 1–141 (MKSIEVHTDG…VDVLARNQAI (141 aa)) constitute an RNase H type-1 domain. The Mg(2+) site is built by D9, E47, D69, and D133.

Belongs to the RNase H family. In terms of assembly, monomer. Requires Mg(2+) as cofactor.

Its subcellular location is the cytoplasm. It carries out the reaction Endonucleolytic cleavage to 5'-phosphomonoester.. Its function is as follows. Endonuclease that specifically degrades the RNA of RNA-DNA hybrids. This Xanthomonas axonopodis pv. citri (strain 306) protein is Ribonuclease H.